The sequence spans 222 residues: Histidine biosynthesis bifunctional protein HisIE (222 aa).

The tract at residues 1 to 128 (MQPLSPAFID…SNALSPPADA (128 aa)) is phosphoribosyl-AMP cyclohydrolase. Residues 129–222 (CTELFRVIES…AARRGAPRRH (94 aa)) are phosphoribosyl-ATP pyrophosphohydrolase.

It in the N-terminal section; belongs to the PRA-CH family. This sequence in the C-terminal section; belongs to the PRA-PH family.

The protein resides in the cytoplasm. It catalyses the reaction 1-(5-phospho-beta-D-ribosyl)-ATP + H2O = 1-(5-phospho-beta-D-ribosyl)-5'-AMP + diphosphate + H(+). The catalysed reaction is 1-(5-phospho-beta-D-ribosyl)-5'-AMP + H2O = 1-(5-phospho-beta-D-ribosyl)-5-[(5-phospho-beta-D-ribosylamino)methylideneamino]imidazole-4-carboxamide. It functions in the pathway amino-acid biosynthesis; L-histidine biosynthesis; L-histidine from 5-phospho-alpha-D-ribose 1-diphosphate: step 2/9. The protein operates within amino-acid biosynthesis; L-histidine biosynthesis; L-histidine from 5-phospho-alpha-D-ribose 1-diphosphate: step 3/9. This chain is Histidine biosynthesis bifunctional protein HisIE, found in Parasynechococcus marenigrum (strain WH8102).